The following is a 316-amino-acid chain: UPF0761 membrane protein PM1616 (316 aa).

The next 6 helical transmembrane spans lie at 36-56 (MLALVPLVMVVFSVFSAFPVF), 92-112 (QMSAVGVISLVVVALMLINSI), 128-148 (LVFSFAIYWLILTLGPLLIGA), 172-192 (ILSFVPFFLTWLIFTLIYTVV), 204-224 (IGALVAAVFFTLGKQAFLWYV), and 236-256 (AMATLPIMLLWIQLSWVVILI).

The protein belongs to the UPF0761 family.

Its subcellular location is the cell inner membrane. The chain is UPF0761 membrane protein PM1616 from Pasteurella multocida (strain Pm70).